Consider the following 717-residue polypeptide: DNA ligase (717 aa).

NAD(+) contacts are provided by residues Asp-44–Asp-48, Ser-93–Leu-94, and Glu-127. Lys-129 functions as the N6-AMP-lysine intermediate in the catalytic mechanism. 4 residues coordinate NAD(+): Arg-150, Glu-186, Lys-302, and Lys-326. Zn(2+) contacts are provided by Cys-431, Cys-434, Cys-455, and Cys-461. The BRCT domain maps to Ser-639–Gly-717.

This sequence belongs to the NAD-dependent DNA ligase family. LigA subfamily. Requires Mg(2+) as cofactor. Mn(2+) serves as cofactor.

The enzyme catalyses NAD(+) + (deoxyribonucleotide)n-3'-hydroxyl + 5'-phospho-(deoxyribonucleotide)m = (deoxyribonucleotide)n+m + AMP + beta-nicotinamide D-nucleotide.. Functionally, DNA ligase that catalyzes the formation of phosphodiester linkages between 5'-phosphoryl and 3'-hydroxyl groups in double-stranded DNA using NAD as a coenzyme and as the energy source for the reaction. It is essential for DNA replication and repair of damaged DNA. This Sinorhizobium fredii (strain NBRC 101917 / NGR234) protein is DNA ligase.